A 130-amino-acid polypeptide reads, in one-letter code: Large ribosomal subunit protein bL17 (130 aa).

The protein belongs to the bacterial ribosomal protein bL17 family. As to quaternary structure, part of the 50S ribosomal subunit. Contacts protein L32.

The sequence is that of Large ribosomal subunit protein bL17 from Buchnera aphidicola subsp. Acyrthosiphon pisum (strain 5A).